The sequence spans 1736 residues: Collagen alpha-2(XI) chain (1736 aa).

Positions 1 to 27 are cleaved as a signal peptide; sequence MERCSRCHRLLLFLPLVLGLSAAPGWA. The Laminin G-like domain maps to 57-228; that stretch reads DVAYRVARPA…QSCGQKDLEC (172 aa). The interval 215-486 is nonhelical region; that stretch reads QAAYQSCGQK…ILQQARLALR (272 aa). Disordered regions lie at residues 228–270, 364–465, and 485–1538; these read CERE…PTES, LSAE…DKGP, and LRGP…GSPA. Residues 258–269 are compositionally biased toward polar residues; sequence PQSQEPQKQPTE. Collagen-like domains are found at residues 399–447, 487–545, and 546–583; these read GPPG…GPPG, GPPG…ADGA, and RGMP…GLPG. Positions 487-1500 are triple-helical region; it reads GPPGPMGYTG…PGHPGPPGEV (1014 aa). Residues 497–533 show a composition bias toward low complexity; the sequence is RPGPLGQPGSPGLKGESGDLGPQGPRGPQGLTGPPGK. A compositionally biased stretch (pro residues) spans 615-624; sequence KGPPGIPGPP. Over residues 650–668 the composition is skewed to low complexity; the sequence is QQGTPGAQGLPGPQGAIGP. One can recognise a Collagen-like 4 domain in the interval 682 to 737; sequence GMPGSDGLPGHPGKEGPPGTKGNQGPSGPQGPLGYPGPRGVKGVDGIRGLKGHKGE. The segment covering 765 to 774 has biased composition (basic and acidic residues); it reads RGEDGPEGPK. 2 stretches are compositionally biased toward low complexity: residues 776 to 789 and 842 to 861; these read RTGP…TGLM and PTGP…SGAK. 5 Collagen-like domains span residues 868–924, 967–1025, 1026–1055, 1056–1086, and 1114–1172; these read GPHG…PGPP, GDPG…AAGS, GGPI…EKGP, IGPT…DGDK, and GPVG…ETGD. Positions 994 to 1003 are enriched in gly residues; the sequence is GTAGGPGLKG. Residues 1029-1040 are compositionally biased toward pro residues; that stretch reads IGPPGRPGPQGP. Low complexity-rich tracts occupy residues 1115–1133 and 1155–1164; these read PVGQ…ARGP and IGLQGLPGPS. The span at 1176–1187 shows a compositional bias: pro residues; sequence MGPPGPPGPRGP. Positions 1188 to 1197 are enriched in low complexity; it reads AGPNGADGPQ. Residues 1198–1207 show a composition bias toward gly residues; the sequence is GSPGGVGNLG. A compositionally biased stretch (low complexity) spans 1217–1230; the sequence is ESGSPGVQGEPGVK. Residues 1232–1241 are compositionally biased toward basic and acidic residues; sequence PRGERGEKGE. Low complexity predominate over residues 1256 to 1272; the sequence is PTGDNGPKGNPGPVGFP. Basic and acidic residues predominate over residues 1287–1296; sequence DGAKGDRGED. A compositionally biased stretch (low complexity) spans 1376 to 1386; the sequence is QQGRPGATGQA. Composition is skewed to pro residues over residues 1388–1397 and 1457–1467; these read PPGPVGPPGL and PGGPPGLPGPS. 2 Collagen-like domains span residues 1393 to 1447 and 1448 to 1499; these read GPPG…GETG and IPGA…PPGE. The segment covering 1469 to 1481 has biased composition (low complexity); sequence PKGAKGATGPAGP. A propeptide spans 1501-1736 (C-terminal propeptide); it reads IQPLPIQMPK…VLLGPVCFMG (236 aa). The 195-residue stretch at 1541–1735 folds into the Fibrillar collagen NC1 domain; the sequence is EEIFGSLDSL…GVLLGPVCFM (195 aa). A disulfide bond links C1571 and C1603. Ca(2+) is bound by residues D1589, N1591, Q1592, C1594, and D1597. A glycan (N-linked (GlcNAc...) asparagine) is linked at N1604. 2 disulfides stabilise this stretch: C1612/C1733 and C1655/C1689.

Belongs to the fibrillar collagen family. Trimers composed of three different chains: alpha 1(XI), alpha 2(XI), and alpha 3(XI). Alpha 3(XI) is a post-translational modification of alpha 1(II). Alpha 1(V) can also be found instead of alpha 3(XI)=1(II). Prolines at the third position of the tripeptide repeating unit (G-X-Y) are hydroxylated in some or all of the chains.

Its subcellular location is the secreted. It localises to the extracellular space. The protein resides in the extracellular matrix. In terms of biological role, may play an important role in fibrillogenesis by controlling lateral growth of collagen II fibrils. The sequence is that of Collagen alpha-2(XI) chain (Col11a2) from Mus musculus (Mouse).